A 1668-amino-acid polypeptide reads, in one-letter code: Kinesin-like protein KIF21B (1668 aa).

The Kinesin motor domain occupies 8-371 (CVKVAVRIRP…LKYANRARNI (364 aa)). 87-94 (GQTGAGKT) is an ATP binding site. Residues 372-465 (KNKVVVNQDK…LMSQEANLLL (94 aa)) are a coiled coil. Positions 401 to 1100 (MEYKAGKRVI…LQALIYNVQH (700 aa)) are interaction with TRIM3. 2 disordered regions span residues 553–629 (KKKE…PEEK) and 837–866 (RVGL…GARS). A compositionally biased stretch (acidic residues) spans 579-628 (NSEETDENEAEEEEEERDESGCEEEEGREDEDEDSGSEESLVDSDSDPEE). The residue at position 580 (Ser580) is a Phosphoserine. Thr583 is subject to Phosphothreonine. The segment covering 847 to 866 (SGAEVSASTTSSEAESGARS) has biased composition (low complexity). The stretch at 924–1019 (IIDIVMQRMT…TKEELDSTDT (96 aa)) forms a coiled coil. Ser1150, Ser1168, and Ser1217 each carry phosphoserine. Residues 1199–1219 (LPTRGSTFPRQSRGATDTSPL) are compositionally biased toward polar residues. The disordered stretch occupies residues 1199-1253 (LPTRGSTFPRQSRGATDTSPLTRRKSYDRGQPIRSTDMGFTPPSSPPTRPRNDRN). Position 1239 is a phosphothreonine (Thr1239). Ser1243 bears the Phosphoserine mark. 7 WD repeats span residues 1308–1345 (GHTK…EIAA), 1348–1386 (GHPN…KCIR), 1412–1450 (QGEH…PIGK), 1453–1495 (GHIG…TGTI), 1504–1541 (PHYD…LIQQ), 1545–1584 (AHKD…PIGE), and 1587–1624 (GHDS…TPCL).

This sequence belongs to the TRAFAC class myosin-kinesin ATPase superfamily. Kinesin family. As to quaternary structure, interacts with TRIM3; the interaction positively affects motility of KIF21B. Interacts with GABARAP and GABA(A) receptor subunits: GABRG2, GABRA1 and GABRA2. May interact with GABA(A) receptor subunits: GABRB2 and GABRB3. Expressed in brain (at protein level). Expressed in spleen and at lower levels in testes.

The protein localises to the cytoplasm. Its subcellular location is the cytoskeleton. It is found in the cell projection. It localises to the dendrite. The protein resides in the growth cone. The protein localises to the axon. Its subcellular location is the cytoplasmic vesicle. Plus-end directed microtubule-dependent motor protein which displays processive activity. Is involved in regulation of microtubule dynamics, synapse function and neuronal morphology, including dendritic tree branching and spine formation. Plays a role in lerning and memory. Involved in delivery of gamma-aminobutyric acid (GABA(A)) receptor to cell surface. This is Kinesin-like protein KIF21B (Kif21b) from Mus musculus (Mouse).